We begin with the raw amino-acid sequence, 401 residues long: Heat stress transcription factor A-4a (401 aa).

A DNA-binding region spans residues 13-107; that stretch reads LPPFLTKTYE…LMKNIHRRKP (95 aa). The interval 122-188 is hydrophobic repeat HR-A/B; the sequence is PLTDSERVRM…TMVSFVSQVL (67 aa). Residues 207–213 carry the Nuclear localization signal motif; that stretch reads RKRRFPR. Positions 256-265 match the AHA1 motif; sequence IAIWENLVSD. Residues 341–350 carry the AHA2 motif; it reads DGFWQQFFSE. The segment at 351-373 is disordered; sequence NPGSTEQREVQLERKDDKDKAGV. A compositionally biased stretch (basic and acidic residues) spans 356–373; the sequence is EQREVQLERKDDKDKAGV. The Nuclear export signal motif lies at 388 to 395; that stretch reads ITEQLGHL.

The protein belongs to the HSF family. Class A subfamily. As to quaternary structure, homotrimer. Exhibits temperature-dependent phosphorylation.

It localises to the cytoplasm. It is found in the nucleus. In terms of biological role, transcriptional activator that specifically binds DNA sequence 5'-AGAAnnTTCT-3' known as heat shock promoter elements (HSE). This chain is Heat stress transcription factor A-4a (HSFA4A), found in Arabidopsis thaliana (Mouse-ear cress).